Here is a 134-residue protein sequence, read N- to C-terminus: UPF0412 protein YaaI (134 aa).

An N-terminal signal peptide occupies residues 1–23; sequence MRSVLTISASLLFGLALSSVAHA.

The protein belongs to the UPF0412 family.

This is UPF0412 protein YaaI from Salmonella choleraesuis (strain SC-B67).